A 526-amino-acid chain; its full sequence is Reticulocyte-binding protein homolog 5 (526 aa).

Residues 1–24 (MIRIKKKLILTIIYIHLFILNRLS) form the signal peptide. Residues 33 to 51 (KNQENNLTLLPIKSTEEEK) are mediates interaction with human BSG. N-linked (GlcNAc...) asparagine glycosylation is found at Asn38 and Asn214. 2 cysteine pairs are disulfide-bonded: Cys224/Cys317 and Cys345/Cys351. Residues 259–279 (EIDDKSEETDDETEEVEDSIQ) show a composition bias toward acidic residues. A disordered region spans residues 259–294 (EIDDKSEETDDETEEVEDSIQDTDSNHTPSNKKKND). An N-linked (GlcNAc...) asparagine glycan is attached at Asn297.

In terms of assembly, forms a complex composed of RH5, P113 and human BSG/basigin; the complex bridges the merozoite and host erythrocyte membranes. Within the complex, interacts (via C-terminus) with human BSG/basigin isoform 2 (via the extracellular domain); the interaction is independent of BSG glycosylation status. Weakly interacts with P.troglodytes BSG but not with G.gorilla BSG. Also, interacts (via N-terminus) with P113; the interaction tethers RH5 to the merozoite membrane. Component of the PfRH5 adhesion complex composed of 1 copy of CyRPA, RH5 and RIPR; the complex is formed during merozoite invasion of host erythrocytes specifically at the interface between the parasite and host membranes. Within the complex, interacts with CyRPA. CyRPA recruits RIPR to the RH5-P113-BSG complex; the formation of the PfRH5 adhesion complex increases the affinity of RH5 for BSG and probably leads to the release of RH5 from P113 while maintaining the interaction of the PfRH5 adhesion complex with BSG. Post-translationally, cleaved into a 45kDa form during merozoite invasion of host erythrocyte.

The protein localises to the secreted. The protein resides in the cytoplasmic vesicle. It localises to the secretory vesicle. It is found in the rhoptry lumen. Its subcellular location is the host cell membrane. In terms of biological role, essential for the invasion of host erythrocytes by blood stage merozoites. By binding P113 at the surface of the merozoite and human BSG/basigin on the erythrocyte membrane, leads to the establishment of a tight junction between the merozoite and host erythrocyte membranes. In addition, the interaction with BSG results in BSG dimerization which triggers an increase in intracellular Ca(2+) in the erythrocyte. This essential step leads to a rearrangement of the erythrocyte cytoskeleton required for the merozoite invasion. In Plasmodium falciparum (isolate 3D7), this protein is Reticulocyte-binding protein homolog 5.